Here is a 341-residue protein sequence, read N- to C-terminus: tRNA-specific 2-thiouridylase MnmA (341 aa).

ATP-binding positions include 8–15 (GMSGGVDS) and methionine 34. The Nucleophile role is filled by cysteine 94. A disulfide bond links cysteine 94 and cysteine 188. Glycine 118 lines the ATP pocket. Residues 136-138 (KDQ) form an interaction with tRNA region. Catalysis depends on cysteine 188, which acts as the Cysteine persulfide intermediate. The interaction with tRNA stretch occupies residues 290–291 (RY).

It belongs to the MnmA/TRMU family.

It is found in the cytoplasm. It catalyses the reaction S-sulfanyl-L-cysteinyl-[protein] + uridine(34) in tRNA + AH2 + ATP = 2-thiouridine(34) in tRNA + L-cysteinyl-[protein] + A + AMP + diphosphate + H(+). Functionally, catalyzes the 2-thiolation of uridine at the wobble position (U34) of tRNA, leading to the formation of s(2)U34. The protein is tRNA-specific 2-thiouridylase MnmA of Sulfurimonas denitrificans (strain ATCC 33889 / DSM 1251) (Thiomicrospira denitrificans (strain ATCC 33889 / DSM 1251)).